We begin with the raw amino-acid sequence, 200 residues long: Probable E3 ubiquitin-protein ligase ATL45 (200 aa).

Residues 26-46 (MVVILSALLCALVCVAGLAAV) traverse the membrane as a helical segment. The RING-type; atypical zinc finger occupies 113 to 155 (CAICITEFSEGEEIRILPLCSHAFHVACIDKWLTSRSSCPSCR).

Belongs to the RING-type zinc finger family. ATL subfamily. In terms of assembly, interacts with BIK1.

The protein resides in the membrane. It carries out the reaction S-ubiquitinyl-[E2 ubiquitin-conjugating enzyme]-L-cysteine + [acceptor protein]-L-lysine = [E2 ubiquitin-conjugating enzyme]-L-cysteine + N(6)-ubiquitinyl-[acceptor protein]-L-lysine.. It functions in the pathway protein modification; protein ubiquitination. Functionally, E3 ubiquitin-protein ligase that possess E3 ubiquitin ligase activity in vitro and mediates protein monoubiquitination. Triggers the monoubiquitination of phosphorylated BIK1 in response to pathogen-associated molecular pattern (PAMP) detection. May be involved in the early steps of the plant defense signaling pathway. The chain is Probable E3 ubiquitin-protein ligase ATL45 from Arabidopsis thaliana (Mouse-ear cress).